A 127-amino-acid polypeptide reads, in one-letter code: Large ribosomal subunit protein uL18 (127 aa).

Belongs to the universal ribosomal protein uL18 family. Part of the 50S ribosomal subunit; part of the 5S rRNA/L5/L18/L25 subcomplex. Contacts the 5S and 23S rRNAs.

This is one of the proteins that bind and probably mediate the attachment of the 5S RNA into the large ribosomal subunit, where it forms part of the central protuberance. This is Large ribosomal subunit protein uL18 from Streptomyces avermitilis (strain ATCC 31267 / DSM 46492 / JCM 5070 / NBRC 14893 / NCIMB 12804 / NRRL 8165 / MA-4680).